Reading from the N-terminus, the 268-residue chain is Small ribosomal subunit protein uS3 (268 aa).

A KH type-2 domain is found at 38–106; it reads IRKLLATGME…QVQLNILEVK (69 aa). The segment at 218–268 is disordered; the sequence is VAAPAGDRPRRERPSRPRRSGATGTTATSTEAGRAATATADAPATTEQKEG. Positions 237–268 are enriched in low complexity; it reads SGATGTTATSTEAGRAATATADAPATTEQKEG.

Belongs to the universal ribosomal protein uS3 family. As to quaternary structure, part of the 30S ribosomal subunit. Forms a tight complex with proteins S10 and S14.

Functionally, binds the lower part of the 30S subunit head. Binds mRNA in the 70S ribosome, positioning it for translation. The sequence is that of Small ribosomal subunit protein uS3 from Rhodococcus jostii (strain RHA1).